We begin with the raw amino-acid sequence, 391 residues long: Rhizopuspepsin-2 (391 aa).

An N-terminal signal peptide occupies residues 1–21; sequence MKLTLISSCVALAFMALATEA. Positions 22-68 are cleaved as a propeptide — activation peptide; the sequence is APSGKKLSIPLTKNTNYKPSAKNAIQKALAKYHRFRTTSSSNSTSTE. The 305-residue stretch at 84–388 folds into the Peptidase A1 domain; the sequence is YYGKVTVGTP…NQEVPEVQIA (305 aa). Asp102 is a catalytic residue. Cysteines 115 and 118 form a disulfide. Asp285 is an active-site residue. Cys319 and Cys352 are joined by a disulfide.

This sequence belongs to the peptidase A1 family.

It carries out the reaction Hydrolysis of proteins with broad specificity similar to that of pepsin A, preferring hydrophobic residues at P1 and P1'. Clots milk and activates trypsinogen. Does not cleave 4-Gln-|-His-5, but does cleave 10-His-|-Leu-11 and 12-Val-|-Glu-13 in B chain of insulin.. This chain is Rhizopuspepsin-2, found in Rhizopus niveus.